Here is a 253-residue protein sequence, read N- to C-terminus: Ubiquinone biosynthesis O-methyltransferase (253 aa).

S-adenosyl-L-methionine-binding residues include Arg-47, Gly-78, Asp-99, and Met-141.

It belongs to the methyltransferase superfamily. UbiG/COQ3 family.

It catalyses the reaction a 3-demethylubiquinol + S-adenosyl-L-methionine = a ubiquinol + S-adenosyl-L-homocysteine + H(+). The enzyme catalyses a 3-(all-trans-polyprenyl)benzene-1,2-diol + S-adenosyl-L-methionine = a 2-methoxy-6-(all-trans-polyprenyl)phenol + S-adenosyl-L-homocysteine + H(+). It participates in cofactor biosynthesis; ubiquinone biosynthesis. Its function is as follows. O-methyltransferase that catalyzes the 2 O-methylation steps in the ubiquinone biosynthetic pathway. This Bradyrhizobium sp. (strain ORS 278) protein is Ubiquinone biosynthesis O-methyltransferase.